The chain runs to 675 residues: Putative exonuclease GOR (675 aa).

The span at 66 to 79 shows a compositional bias: basic and acidic residues; sequence VAKEAAPEASRHLG. Disordered regions lie at residues 66–90 and 225–263; these read VAKE…APEG and AKRT…TATT. The segment at 358-483 is GOR1-125 epitope; it reads MPGLSRAALY…VRDGRKESLD (126 aa).

It belongs to the REXO1/REXO3 family.

The protein resides in the cytoplasm. Its subcellular location is the nucleus. The chain is Putative exonuclease GOR (REXO1L1P) from Homo sapiens (Human).